Here is a 455-residue protein sequence, read N- to C-terminus: Chromosomal replication initiator protein DnaA (455 aa).

The tract at residues 1 to 82 (MNRNTSSLWA…NPDFVVKLVE (82 aa)) is domain I, interacts with DnaA modulators. A domain II region spans residues 82–117 (EGVKPAPKQNNIVTTKQNAETAVDSEQHLQSVEFKT). Positions 118–335 (GLNSNHLFEN…GALNRVIANA (218 aa)) are domain III, AAA+ region. 4 residues coordinate ATP: glycine 163, glycine 165, lysine 166, and threonine 167. Positions 336 to 455 (EFTGKTITID…WSNLIRTLSA (120 aa)) are domain IV, binds dsDNA.

The protein belongs to the DnaA family. In terms of assembly, oligomerizes as a right-handed, spiral filament on DNA at oriC.

It localises to the cytoplasm. Its function is as follows. Plays an essential role in the initiation and regulation of chromosomal replication. ATP-DnaA binds to the origin of replication (oriC) to initiate formation of the DNA replication initiation complex once per cell cycle. Binds the DnaA box (a 9 base pair repeat at the origin) and separates the double-stranded (ds)DNA. Forms a right-handed helical filament on oriC DNA; dsDNA binds to the exterior of the filament while single-stranded (ss)DNA is stabiized in the filament's interior. The ATP-DnaA-oriC complex binds and stabilizes one strand of the AT-rich DNA unwinding element (DUE), permitting loading of DNA polymerase. After initiation quickly degrades to an ADP-DnaA complex that is not apt for DNA replication. Binds acidic phospholipids. The sequence is that of Chromosomal replication initiator protein DnaA from Actinobacillus succinogenes (strain ATCC 55618 / DSM 22257 / CCUG 43843 / 130Z).